The chain runs to 126 residues: uncharacterized protein (126 aa).

Residues 4 to 126 (RIDHTGIMVR…DGEWIEFFQR (123 aa)) enclose the VOC domain. Histidine 7, glutamate 42, histidine 74, and glutamate 122 together coordinate a divalent metal cation.

Belongs to the glyoxalase I family.

This is an uncharacterized protein from Bacillus subtilis (strain 168).